The primary structure comprises 349 residues: Thiamine-phosphate synthase (349 aa).

The unknown stretch occupies residues 1-125 (MGCESSLDPR…SAEAAAIRYG (125 aa)). Positions 63 to 85 (RARSTVTDPGAGMEHPAQLDRHS) are disordered. The segment at 126–349 (LYDLEVTCLT…LLSSLSRPTL (224 aa)) is thiamine-phosphate synthase. 4-amino-2-methyl-5-(diphosphooxymethyl)pyrimidine contacts are provided by residues 177–181 (QHRCK) and Asn-209. Positions 210 and 229 each coordinate Mg(2+). 4-amino-2-methyl-5-(diphosphooxymethyl)pyrimidine contacts are provided by Ser-248 and Lys-277. Gly-304 contacts 2-[(2R,5Z)-2-carboxy-4-methylthiazol-5(2H)-ylidene]ethyl phosphate.

Belongs to the thiamine-phosphate synthase family. Mg(2+) serves as cofactor.

It catalyses the reaction 2-[(2R,5Z)-2-carboxy-4-methylthiazol-5(2H)-ylidene]ethyl phosphate + 4-amino-2-methyl-5-(diphosphooxymethyl)pyrimidine + 2 H(+) = thiamine phosphate + CO2 + diphosphate. The enzyme catalyses 2-(2-carboxy-4-methylthiazol-5-yl)ethyl phosphate + 4-amino-2-methyl-5-(diphosphooxymethyl)pyrimidine + 2 H(+) = thiamine phosphate + CO2 + diphosphate. It carries out the reaction 4-methyl-5-(2-phosphooxyethyl)-thiazole + 4-amino-2-methyl-5-(diphosphooxymethyl)pyrimidine + H(+) = thiamine phosphate + diphosphate. The protein operates within cofactor biosynthesis; thiamine diphosphate biosynthesis; thiamine phosphate from 4-amino-2-methyl-5-diphosphomethylpyrimidine and 4-methyl-5-(2-phosphoethyl)-thiazole: step 1/1. Functionally, condenses 4-methyl-5-(beta-hydroxyethyl)thiazole monophosphate (THZ-P) and 2-methyl-4-amino-5-hydroxymethyl pyrimidine pyrophosphate (HMP-PP) to form thiamine monophosphate (TMP). This chain is Thiamine-phosphate synthase, found in Parasynechococcus marenigrum (strain WH8102).